Reading from the N-terminus, the 166-residue chain is Large ribosomal subunit protein uL10 (166 aa).

The protein belongs to the universal ribosomal protein uL10 family. In terms of assembly, part of the ribosomal stalk of the 50S ribosomal subunit. The N-terminus interacts with L11 and the large rRNA to form the base of the stalk. The C-terminus forms an elongated spine to which L12 dimers bind in a sequential fashion forming a multimeric L10(L12)X complex.

Its function is as follows. Forms part of the ribosomal stalk, playing a central role in the interaction of the ribosome with GTP-bound translation factors. This is Large ribosomal subunit protein uL10 from Shewanella sediminis (strain HAW-EB3).